Consider the following 147-residue polypeptide: Hemoglobin subunit beta-2 (147 aa).

A Globin domain is found at 3–147 (EWTDSERAII…VVSALGRQYH (145 aa)). Residues His64 and His93 each contribute to the heme b site.

It belongs to the globin family. As to quaternary structure, hb 3 is a heterotetramer of two alpha-2 and two beta-2 chains. In terms of tissue distribution, red blood cells.

Functionally, involved in oxygen transport from gills to the various peripheral tissues. This chain is Hemoglobin subunit beta-2 (hbb2), found in Arctogadus glacialis (Arctic cod).